The following is a 435-amino-acid chain: MPLFLLSLPTPPSASGHERRQRPEAKTSGSEKKYLRAMQANRSQLHSPPGTGSSEDASTPQCVHTRLTGEGSCPHSGDVHIQINSIPKECAENASSRNIRSGVHSCAHGCVHSRLRGHSHSEARLTDDTAAESGDHGSSSFSEFRYLFKWLQKSLPYILILSVKLVMQHITGISLGIGLLTTFMYANKSIVNQVFLRERSSKIQCAWLLVFLAGSSVLLYYTFHSQSLYYSLIFLNPTLDHLSFWEVFWIVGITDFILKFFFMGLKCLILLVPSFIMPFKSKGYWYMLLEELCQYYRTFVPIPVWFRYLISYGEFGNVTRWSLGILLALLYLILKLLEFFGHLRTFRQVLRIFFTQPSYGVAASKRQCSDVDDICSICQAEFQKPILLICQHIFCEECMTLWFNREKTCPLCRTVISDHINKWKDGATSSHLQIY.

Residues 1–62 (MPLFLLSLPT…SSEDASTPQC (62 aa)) form a disordered region. A compositionally biased stretch (basic and acidic residues) spans 16-34 (GHERRQRPEAKTSGSEKKY). Residues 40–62 (ANRSQLHSPPGTGSSEDASTPQC) show a composition bias toward polar residues. The next 6 helical transmembrane spans lie at 158–178 (ILIL…LGIG), 203–223 (IQCA…YYTF), 233–253 (IFLN…IVGI), 256–276 (FILK…PSFI), 298–318 (TFVP…FGNV), and 323–343 (LGIL…FGHL). The required for ubiquitin ligase activity and for protection against ER stress-induced cell death stretch occupies residues 368–419 (CSDVDDICSICQAEFQKPILLICQHIFCEECMTLWFNREKTCPLCRTVISDH). The segment at 375 to 413 (CSICQAEFQKPILLICQHIFCEECMTLWFNREKTCPLCR) adopts an RING-type zinc-finger fold.

As to expression, expressed at highest levels in testis, lower levels in heart, liver, lung, and kidney. Not detected in brain, ovary, and uterus. Down-regulated in testis from patients with maturation arrest (MA) or Sertoli cell-only syndrome (SCOS). Ubiquitously expressed with high expression in testis.

The protein localises to the endoplasmic reticulum membrane. The enzyme catalyses S-ubiquitinyl-[E2 ubiquitin-conjugating enzyme]-L-cysteine + [acceptor protein]-L-lysine = [E2 ubiquitin-conjugating enzyme]-L-cysteine + N(6)-ubiquitinyl-[acceptor protein]-L-lysine.. The protein operates within protein modification; protein ubiquitination. E3 ubiquitin-protein ligase that acts in the endoplasmic reticulum (ER)-associated degradation (ERAD) pathway, which targets misfolded proteins that accumulate in the endoplasmic reticulum (ER) for ubiquitination and subsequent proteasome-mediated degradation. Protects cells from ER stress-induced apoptosis. In Homo sapiens (Human), this protein is E3 ubiquitin-protein ligase RNFT1 (RNFT1).